The primary structure comprises 475 residues: Beta-amyrin 6-beta-monooxygenase (475 aa).

Residues 6–22 form a helical membrane-spanning segment; it reads LYSLAFALVYISLYFIF. A heme-binding site is contributed by C423.

It belongs to the cytochrome P450 family. Heme is required as a cofactor. In terms of tissue distribution, specifically expressed in roots.

The protein localises to the membrane. It catalyses the reaction beta-amyrin + reduced [NADPH--hemoprotein reductase] + O2 = daturadiol + oxidized [NADPH--hemoprotein reductase] + H2O + H(+). Catalyzes the C-6 beta-hydroxylation of beta-amyrin to form daturadiol. Catalyzes the C-6 beta-hydroxylation of alpha-amyrin to form 6-beta-hydroxy-alpha-amyrin. In Solanum lycopersicum (Tomato), this protein is Beta-amyrin 6-beta-monooxygenase.